The chain runs to 252 residues: MGSMGGSRHLKAINAPRYWPILRKEYRWVVKSSPGPHPISRSLPLLILVRDMLGYAKTGKEARRLIAEGYFKIDGRVRRDYKFPVGVMDVIEIVGVNKYYRVIPVPTKVLGLIEISREEASFKLCRIENKTTVKNGHIQLNLHDGRNVLIRVNDPRNPVEDTYDTLGVLKLSIPVQQILDYVPLKEGVIAIVSGGRNVGRVGKIVSIHKGMRRYRSIVTLEDKQGNKFQTSLDYIFPIGVEKPLIKLPEGAW.

Residues 43–106 (LPLLILVRDM…NKYYRVIPVP (64 aa)) form the S4 RNA-binding domain.

This sequence belongs to the eukaryotic ribosomal protein eS4 family.

The chain is Small ribosomal subunit protein eS4 from Desulfurococcus amylolyticus (strain DSM 18924 / JCM 16383 / VKM B-2413 / 1221n) (Desulfurococcus kamchatkensis).